The sequence spans 387 residues: Sialic acid-binding Ig-like lectin 13 (387 aa).

An N-terminal signal peptide occupies residues 1 to 15 (MLPLLLPLLWAGALA). Positions 16 to 138 (LEGIFQLEVP…KDPPLSVHVT (123 aa)) constitute an Ig-like V-type domain. Residues 16–341 (LEGIFQLEVP…QRKSGPMAEV (326 aa)) lie on the Extracellular side of the membrane. 3 cysteine pairs are disulfide-bonded: Cys35/Cys168, Cys40/Cys100, and Cys162/Cys211. N-linked (GlcNAc...) asparagine glycosylation occurs at Asn99. Arg118 is a binding site for N-acetylneuraminate. Residues 144–227 (PDILIPGALK…AGVTTTRTVR (84 aa)) form the Ig-like C2-type 1 domain. 3 N-linked (GlcNAc...) asparagine glycosylation sites follow: Asn229, Asn236, and Asn254. Residues 234–326 (PQNLTLTVFQ…RNPLGSQQVS (93 aa)) enclose the Ig-like C2-type 2 domain. The cysteines at positions 270 and 314 are disulfide-linked. A helical membrane pass occupies residues 342–362 (VLVAIGEAAVKILLLFLCLII). Over 363–387 (LRVKSHRRKAAKAATGVEAAKVVKG) the chain is Cytoplasmic.

It belongs to the immunoglobulin superfamily. SIGLEC (sialic acid binding Ig-like lectin) family.

Its subcellular location is the membrane. Putative adhesion molecule that mediates sialic-acid dependent binding to cells. This chain is Sialic acid-binding Ig-like lectin 13 (SIGLEC13), found in Pan troglodytes (Chimpanzee).